The following is a 98-amino-acid chain: Class II hydrophobin 1 (98 aa).

Residues 1–16 (MQFFTTVVLFAAAAMA) form the signal peptide. 4 cysteine pairs are disulfide-bonded: Cys-29-Cys-79, Cys-39-Cys-70, Cys-40-Cys-52, and Cys-80-Cys-92.

The protein belongs to the cerato-ulmin hydrophobin family. Homodimer. Homodimers further self-assemble to form highly ordered films at water-air interfaces through intermolecular interactions. Expressed in mycelium, conidiating mycelium and aerial hyphae.

It localises to the secreted. The protein localises to the cell wall. Aerial growth, conidiation, and dispersal of filamentous fungi in the environment rely upon a capability of their secreting small amphipathic proteins called hydrophobins (HPBs) with low sequence identity. Class I can self-assemble into an outermost layer of rodlet bundles on aerial cell surfaces, conferring cellular hydrophobicity that supports fungal growth, development and dispersal; whereas Class II form highly ordered films at water-air interfaces through intermolecular interactions but contribute nothing to the rodlet structure. Hyd1 is a class II hydrophobin that plays probably a role during conidiophore development and in intraspecific signaling or hyphal fusion. Hyd1 and Hyd3 are jointly required for conidial hydrophobicity and dispersal, but seem not to be involved in mycelia hydrophobicity. Inhibits conidial germination in environments not suitable for mycelial growth. Not necessary for root adhesion and colonization. The chain is Class II hydrophobin 1 from Bionectria ochroleuca (Gliocladium roseum).